A 434-amino-acid polypeptide reads, in one-letter code: Nicotinate phosphoribosyltransferase (434 aa).

The residue at position 242 (histidine 242) is a Phosphohistidine; by autocatalysis.

It belongs to the NAPRTase family. Transiently phosphorylated on a His residue during the reaction cycle. Phosphorylation strongly increases the affinity for substrates and increases the rate of nicotinate D-ribonucleotide production. Dephosphorylation regenerates the low-affinity form of the enzyme, leading to product release.

The catalysed reaction is nicotinate + 5-phospho-alpha-D-ribose 1-diphosphate + ATP + H2O = nicotinate beta-D-ribonucleotide + ADP + phosphate + diphosphate. The protein operates within cofactor biosynthesis; NAD(+) biosynthesis; nicotinate D-ribonucleotide from nicotinate: step 1/1. Functionally, catalyzes the synthesis of beta-nicotinate D-ribonucleotide from nicotinate and 5-phospho-D-ribose 1-phosphate at the expense of ATP. The sequence is that of Nicotinate phosphoribosyltransferase from Sinorhizobium medicae (strain WSM419) (Ensifer medicae).